The following is a 227-amino-acid chain: Ornithine decarboxylase antizyme 1 (227 aa).

Belongs to the ODC antizyme family. In terms of assembly, interacts with ODC1 and thereby sterically blocks ODC homodimerization. Forms a ternary complex with PSMB4 and OAZ1 before PSMB4 is incorporated into the 20S proteasome. Interacts with AZIN2; this interaction disrupts the interaction between the antizyme and ODC1. Interacts with FAM171A1.

In terms of biological role, ornithine decarboxylase (ODC) antizyme protein that negatively regulates ODC activity and intracellular polyamine biosynthesis and uptake in response to increased intracellular polyamine levels. Binds to ODC monomers, inhibiting the assembly of the functional ODC homodimer, and targets the monomers for ubiquitin-independent proteolytic destruction by the 26S proteasome. Triggers ODC degradation by inducing the exposure of a cryptic proteasome-interacting surface of ODC. Stabilizes AZIN2 by interfering with its ubiquitination. Also inhibits cellular uptake of polyamines by inactivating the polyamine uptake transporter. SMAD1/OAZ1/PSMB4 complex mediates the degradation of the CREBBP/EP300 repressor SNIP1. Involved in the translocation of AZIN2 from ER-Golgi intermediate compartment (ERGIC) to the cytosol. The chain is Ornithine decarboxylase antizyme 1 (Oaz1) from Mus musculus (Mouse).